The sequence spans 212 residues: MTAEASVETLEAALLARAKRLAEEYLSRAQHSRDRIIEEANERLRLREEREILAAKAMAERVYRRQVQASELKLQGKLDRLRWEWVQAVVQNLSHQCKVLATDKSRYLPVLQRLLAAGAAAIEREELIAEINQQDLGRLQETWKTFAAEAVSDKCVVLSSEPLTCSGGVRVVSKDGRIRVDNTFEGRLERLAEELHQSIMERLFVPPSGLHG.

Belongs to the V-ATPase E subunit family.

Its function is as follows. Produces ATP from ADP in the presence of a proton gradient across the membrane. This is V-type ATP synthase subunit E from Nitrosococcus oceani (strain ATCC 19707 / BCRC 17464 / JCM 30415 / NCIMB 11848 / C-107).